The sequence spans 198 residues: Peptidyl-tRNA hydrolase (198 aa).

TRNA is bound at residue Y16. The active-site Proton acceptor is H21. The tRNA site is built by F67, N69, and N115.

This sequence belongs to the PTH family. Monomer.

Its subcellular location is the cytoplasm. It catalyses the reaction an N-acyl-L-alpha-aminoacyl-tRNA + H2O = an N-acyl-L-amino acid + a tRNA + H(+). Its function is as follows. Hydrolyzes ribosome-free peptidyl-tRNAs (with 1 or more amino acids incorporated), which drop off the ribosome during protein synthesis, or as a result of ribosome stalling. Catalyzes the release of premature peptidyl moieties from peptidyl-tRNA molecules trapped in stalled 50S ribosomal subunits, and thus maintains levels of free tRNAs and 50S ribosomes. In Prochlorococcus marinus (strain MIT 9301), this protein is Peptidyl-tRNA hydrolase.